We begin with the raw amino-acid sequence, 477 residues long: MAKWRLATATLRRQLQSSSPTISTFKNPTKALSAAAHQSTRSYSTTQTDDSRGKWLTLPPFSPTIDGTAVGKDLLSDGDSVKSSTDNSKTTALRWILRCRPDLPRTLVQKLFRLRQVRREMSMSVDGDELQRSQLKRVAAKESLNVGDRIYLPLSVDNDTPQTPPAKKESFQCSDEERKFVCSLVLYKDPAIIVLNKPHGLAVQGGSGIKTSIDELAASCLKFDKSESPRLVHRLDRDCSGLLVLARTQTAATVLHSIFREKTTGASAYGVKKNVKSLKRKYMALVIGCPPRQRGQISAPLRKVVVDDGKSERITVNDNGELVSTQHAITEYRVIESSPHGYTWLELRPLTGRKHQLRVHCAEVLGTPIVGDYKYGWQAHKAREPFVSSENNPTKQSSSPFGLDLDGGDVSSKQPHLHLHSKQIDLPNISQLLEKMQVSSDSDISDLDSLKFDAPLPSHMQLSFNLLKSRVETCDKN.

Residues 1 to 43 (MAKWRLATATLRRQLQSSSPTISTFKNPTKALSAAAHQSTRSY) constitute a mitochondrion transit peptide. A disordered region spans residues 34 to 55 (AAAHQSTRSYSTTQTDDSRGKW). Residues 36 to 48 (AHQSTRSYSTTQT) show a composition bias toward polar residues. Positions 90-175 (TTALRWILRC…AKKESFQCSD (86 aa)) constitute an S4 RNA-binding domain. Residue aspartate 236 is part of the active site.

The protein belongs to the pseudouridine synthase RluA family.

It localises to the mitochondrion. The catalysed reaction is a uridine in RNA = a pseudouridine in RNA. In Arabidopsis thaliana (Mouse-ear cress), this protein is RNA pseudouridine synthase 4, mitochondrial.